The primary structure comprises 488 residues: MELIREARPHSREKLKSNLIEWFHWLLREAELYDVRYPVKGAYVWRPYGMKIRRNVENLIRKFHDETGHEEVLFPVFIPYEFFGKESQHIKGFEKEVFWVSKGGEAGERLVLRPTSETAIMPMVKLWIQDYKDLPLRVYQIVSVFRAETKMTHPMIRLREISMFKEAHTVHADKEDAERQVREAVEIYKRIFDEMCLAYLINKRPEWDKFAGAEYTIAFDTILPDGRSLQIGTVHYLGTNFTKVFEVTYLDADGTRKLAHTTSYGISERSIAAMLITHGDDGGTTLPPKLAPIQVVVIPIYYGEEEAPLVMPLVRETANRLNEAGIRVYVDERADKTPGWKFYYWELKGVPLRVEIGKRDVEKRQAVIARRDTLEKYAVSINELVDAVKQLMKSVEENLRKRAWEELKGRVVKAEDIEVAKAAIKEGKVVEIPWSGDNDCGIKIQELVGADALGIPLDADASVGGYDLRDLACKERRAELWLRLSERY.

The protein belongs to the class-II aminoacyl-tRNA synthetase family. ProS type 3 subfamily. Homodimer.

The protein localises to the cytoplasm. It carries out the reaction tRNA(Pro) + L-proline + ATP = L-prolyl-tRNA(Pro) + AMP + diphosphate. In terms of biological role, catalyzes the attachment of proline to tRNA(Pro) in a two-step reaction: proline is first activated by ATP to form Pro-AMP and then transferred to the acceptor end of tRNA(Pro). This is Proline--tRNA ligase from Pyrobaculum aerophilum (strain ATCC 51768 / DSM 7523 / JCM 9630 / CIP 104966 / NBRC 100827 / IM2).